The sequence spans 264 residues: Thymidylate synthase (264 aa).

Residue Arg-21 coordinates dUMP. (6R)-5,10-methylene-5,6,7,8-tetrahydrofolate is bound at residue His-51. 126–127 is a binding site for dUMP; sequence RR. Cys-146 acts as the Nucleophile in catalysis. DUMP-binding positions include 166 to 169, Asn-177, and 207 to 209; these read RSCD and HLY. Residue Asp-169 coordinates (6R)-5,10-methylene-5,6,7,8-tetrahydrofolate. Ser-263 provides a ligand contact to (6R)-5,10-methylene-5,6,7,8-tetrahydrofolate.

The protein belongs to the thymidylate synthase family. Bacterial-type ThyA subfamily. As to quaternary structure, homodimer.

The protein resides in the cytoplasm. The enzyme catalyses dUMP + (6R)-5,10-methylene-5,6,7,8-tetrahydrofolate = 7,8-dihydrofolate + dTMP. It participates in pyrimidine metabolism; dTTP biosynthesis. Functionally, catalyzes the reductive methylation of 2'-deoxyuridine-5'-monophosphate (dUMP) to 2'-deoxythymidine-5'-monophosphate (dTMP) while utilizing 5,10-methylenetetrahydrofolate (mTHF) as the methyl donor and reductant in the reaction, yielding dihydrofolate (DHF) as a by-product. This enzymatic reaction provides an intracellular de novo source of dTMP, an essential precursor for DNA biosynthesis. This chain is Thymidylate synthase, found in Buchnera aphidicola subsp. Acyrthosiphon pisum (strain APS) (Acyrthosiphon pisum symbiotic bacterium).